Here is an 865-residue protein sequence, read N- to C-terminus: Rifampicin phosphotransferase (865 aa).

An ATP-binding region spans residues 2 to 314; it reads SGRLVVDLQD…FHIVQSRPIT (313 aa). 8 residues coordinate ATP: lysine 23, arginine 117, glycine 132, threonine 136, glutamine 183, glutamate 297, glutamine 309, and arginine 311. Residues 327-752 form a rifampicin-binding region; that stretch reads FRVYLSVGHQ…TSEGVALSGA (426 aa). Residues 403–430 form a disordered region; it reads ENGEFEPTPAETDGGAPPAGDGAEPDEA. Low complexity predominate over residues 409 to 424; the sequence is PTPAETDGGAPPAGDG. Positions 765-863 are swivel phosphohistidine; it reads GLAVSAGTVE…VHGTEGYIEL (99 aa). Histidine 823 acts as the Tele-phosphohistidine intermediate in catalysis.

This sequence belongs to the rifampicin phosphotransferase family.

It carries out the reaction rifampicin + ATP + H2O = 21-phosphorifampicin + AMP + phosphate + 2 H(+). Functionally, catalyzes the phosphorylation of rifampicin, also known as rifampin (RIF), leading to its inactivation. Confers high level resistance to a variety of clinically used rifamycin antibiotics. The chain is Rifampicin phosphotransferase from Streptomyces sp.